A 549-amino-acid polypeptide reads, in one-letter code: Frizzled/smoothened-like sans CRD protein A (549 aa).

A signal peptide spans M1–C22. Residues K23–K89 lie on the Extracellular side of the membrane. An N-linked (GlcNAc...) asparagine glycan is attached at N63. Residues I90–I110 form a helical membrane-spanning segment. The Cytoplasmic portion of the chain corresponds to N111–T119. A helical membrane pass occupies residues I120–V140. Topologically, residues H141–C162 are extracellular. N158 is a glycosylation site (N-linked (GlcNAc...) asparagine). The helical transmembrane segment at T163–L183 threads the bilayer. The Cytoplasmic segment spans residues S184–K198. Residues V199–L219 traverse the membrane as a helical segment. At V220–Q241 the chain is on the extracellular side. A helical transmembrane segment spans residues I242 to L262. Over V263 to P287 the chain is Cytoplasmic. A helical transmembrane segment spans residues L288 to I308. The Extracellular segment spans residues N309–E346. The helical transmembrane segment at F347–T367 threads the bilayer. The Cytoplasmic portion of the chain corresponds to Q368–N549. Composition is skewed to low complexity over residues N417–N474 and N536–N549. 2 disordered regions span residues N417–S483 and Q528–N549. The stretch at N432–E475 forms a coiled coil.

Belongs to the G-protein coupled receptor Fz/Smo family.

Its subcellular location is the membrane. The sequence is that of Frizzled/smoothened-like sans CRD protein A (fscA) from Dictyostelium discoideum (Social amoeba).